The following is a 211-amino-acid chain: tRNA (guanine-N(7)-)-methyltransferase (211 aa).

Residues Glu-44, Asp-69, Asp-96, and Asp-118 each coordinate S-adenosyl-L-methionine. Residue Asp-118 is part of the active site. Lys-122 is a substrate binding site. An interaction with RNA region spans residues 124-129 (RHEKRR). Substrate-binding positions include Asp-154 and 191–194 (TEYE).

It belongs to the class I-like SAM-binding methyltransferase superfamily. TrmB family.

It carries out the reaction guanosine(46) in tRNA + S-adenosyl-L-methionine = N(7)-methylguanosine(46) in tRNA + S-adenosyl-L-homocysteine. Its pathway is tRNA modification; N(7)-methylguanine-tRNA biosynthesis. In terms of biological role, catalyzes the formation of N(7)-methylguanine at position 46 (m7G46) in tRNA. The sequence is that of tRNA (guanine-N(7)-)-methyltransferase from Streptococcus equi subsp. zooepidemicus (strain MGCS10565).